Reading from the N-terminus, the 324-residue chain is Ribose 1,5-bisphosphate isomerase (324 aa).

Substrate-binding positions include 22 to 25 (RGAG) and Arg65. Catalysis depends on Cys135, which acts as the Proton acceptor. A substrate-binding site is contributed by 137–139 (SKA). Asp204 (proton donor) is an active-site residue. Substrate-binding positions include 214–215 (NK) and Lys240.

Belongs to the eIF-2B alpha/beta/delta subunits family. R15P isomerase subfamily.

It catalyses the reaction alpha-D-ribose 1,5-bisphosphate = D-ribulose 1,5-bisphosphate. Functionally, catalyzes the isomerization of ribose 1,5-bisphosphate (R15P) to ribulose 1,5-bisphosphate (RuBP), the CO(2) acceptor and substrate for RubisCO. Functions in an archaeal AMP degradation pathway, together with AMP phosphorylase and RubisCO. The polypeptide is Ribose 1,5-bisphosphate isomerase (Pyrococcus horikoshii (strain ATCC 700860 / DSM 12428 / JCM 9974 / NBRC 100139 / OT-3)).